The sequence spans 59 residues: Large ribosomal subunit protein bL33 (59 aa).

The protein belongs to the bacterial ribosomal protein bL33 family.

This is Large ribosomal subunit protein bL33 from Borrelia turicatae (strain 91E135).